The primary structure comprises 178 residues: Crossover junction endodeoxyribonuclease RuvC (178 aa).

Residues D21, E81, and H154 contribute to the active site. Mg(2+) contacts are provided by D21, E81, and H154.

This sequence belongs to the RuvC family. Homodimer which binds Holliday junction (HJ) DNA. The HJ becomes 2-fold symmetrical on binding to RuvC with unstacked arms; it has a different conformation from HJ DNA in complex with RuvA. In the full resolvosome a probable DNA-RuvA(4)-RuvB(12)-RuvC(2) complex forms which resolves the HJ. It depends on Mg(2+) as a cofactor.

The protein localises to the cytoplasm. It catalyses the reaction Endonucleolytic cleavage at a junction such as a reciprocal single-stranded crossover between two homologous DNA duplexes (Holliday junction).. In terms of biological role, the RuvA-RuvB-RuvC complex processes Holliday junction (HJ) DNA during genetic recombination and DNA repair. Endonuclease that resolves HJ intermediates. Cleaves cruciform DNA by making single-stranded nicks across the HJ at symmetrical positions within the homologous arms, yielding a 5'-phosphate and a 3'-hydroxyl group; requires a central core of homology in the junction. The consensus cleavage sequence is 5'-(A/T)TT(C/G)-3'. Cleavage occurs on the 3'-side of the TT dinucleotide at the point of strand exchange. HJ branch migration catalyzed by RuvA-RuvB allows RuvC to scan DNA until it finds its consensus sequence, where it cleaves and resolves the cruciform DNA. This is Crossover junction endodeoxyribonuclease RuvC from Treponema denticola (strain ATCC 35405 / DSM 14222 / CIP 103919 / JCM 8153 / KCTC 15104).